The following is a 499-amino-acid chain: Type-1 glutamine synthetase 1 (499 aa).

The GS beta-grasp domain occupies 50-146; it reads PQLKFIRVCW…IFGEFFYLDN (97 aa). The region spanning 158 to 499 is the GS catalytic domain; that stretch reads PRNSLQRAID…DQILKLLELF (342 aa).

This sequence belongs to the glutamine synthetase family.

It catalyses the reaction L-glutamate + NH4(+) + ATP = L-glutamine + ADP + phosphate + H(+). The chain is Type-1 glutamine synthetase 1 (glnA1) from Dictyostelium discoideum (Social amoeba).